The primary structure comprises 324 residues: Lipoyl synthase (324 aa).

C71, C76, C82, C97, C101, C104, and S311 together coordinate [4Fe-4S] cluster. Positions 83–300 constitute a Radical SAM core domain; the sequence is FGHGTATFLI…GDKAREMGFT (218 aa).

This sequence belongs to the radical SAM superfamily. Lipoyl synthase family. [4Fe-4S] cluster is required as a cofactor.

The protein resides in the cytoplasm. It carries out the reaction [[Fe-S] cluster scaffold protein carrying a second [4Fe-4S](2+) cluster] + N(6)-octanoyl-L-lysyl-[protein] + 2 oxidized [2Fe-2S]-[ferredoxin] + 2 S-adenosyl-L-methionine + 4 H(+) = [[Fe-S] cluster scaffold protein] + N(6)-[(R)-dihydrolipoyl]-L-lysyl-[protein] + 4 Fe(3+) + 2 hydrogen sulfide + 2 5'-deoxyadenosine + 2 L-methionine + 2 reduced [2Fe-2S]-[ferredoxin]. It participates in protein modification; protein lipoylation via endogenous pathway; protein N(6)-(lipoyl)lysine from octanoyl-[acyl-carrier-protein]: step 2/2. Its function is as follows. Catalyzes the radical-mediated insertion of two sulfur atoms into the C-6 and C-8 positions of the octanoyl moiety bound to the lipoyl domains of lipoate-dependent enzymes, thereby converting the octanoylated domains into lipoylated derivatives. The sequence is that of Lipoyl synthase from Nitrosococcus oceani (strain ATCC 19707 / BCRC 17464 / JCM 30415 / NCIMB 11848 / C-107).